Reading from the N-terminus, the 267-residue chain is Apolipoprotein A-I (267 aa).

An N-terminal signal peptide occupies residues 1-18 (MKATVLTLAVLFLTGSQA). A run of 2 repeats spans residues 68-89 (LKLL…EQLG) and 90-111 (PVTQ…QEMS). Residues 68–267 (LKLLDNWDSV…EEYTKKLSTQ (200 aa)) form a 10 X approximate tandem repeats region. Met-110 carries the post-translational modification Methionine sulfoxide. The stretch at 112 to 122 (KDLEEVKAKVQ) is one 3; half-length repeat. 5 consecutive repeat copies span residues 123-144 (PYLD…QKVE), 145-166 (PLRA…EKLS), 167-188 (PLGE…THLA), 189-210 (PYSD…ENGG), and 211-232 (ARLA…EKAK). The residue at position 136 (Met-136) is a Methionine sulfoxide. One copy of the 9; half-length repeat lies at 233 to 243 (PALEDLRQGLL). Repeat 10 spans residues 244–267 (PVLESFKVSFLSALEEYTKKLSTQ).

Belongs to the apolipoprotein A1/A4/E family. Homodimer. Interacts with APOA1BP and CLU. Component of a sperm activating protein complex (SPAP), consisting of APOA1, an immunoglobulin heavy chain, an immunoglobulin light chain and albumin. Interacts with NDRG1. Interacts with SCGB3A2. Interacts with NAXE and YJEFN3. Glycosylated. Post-translationally, palmitoylated. In terms of processing, phosphorylation sites are present in the extracellular medium. Major protein of plasma HDL, also found in chylomicrons.

It localises to the secreted. Its function is as follows. Participates in the reverse transport of cholesterol from tissues to the liver for excretion by promoting cholesterol efflux from tissues and by acting as a cofactor for the lecithin cholesterol acyltransferase (LCAT). As part of the SPAP complex, activates spermatozoa motility. The sequence is that of Apolipoprotein A-I (APOA1) from Papio hamadryas (Hamadryas baboon).